The sequence spans 40 residues: Mastoparan-like peptide 12c (40 aa).

A signal peptide spans 1 to 7 (MSAEALA). A disordered region spans residues 1-22 (MSAEALADPKADPLAGPNPDAD). 4 AXPX repeats span residues 7-10 (ADPK), 11-14 (ADPL), 15-18 (AGPN), and 19-22 (PDAD). The propeptide occupies 8-25 (DPKADPLAGPNPDADPEA). L39 is subject to Leucine amide.

It belongs to the MCD family. Mastoparan subfamily. In terms of tissue distribution, expressed by the venom gland.

The protein localises to the secreted. In terms of biological role, shows mast cell degranulation and antimicrobial activities against the Gram-negative bacteria E.coli ATCC 25922 (MIC=6.0 ug/ml), the Gram-positive bacteria S.aureus ATCC 2592 (MIC=3.0 ug/ml) and the fungus C.albicans ATCC 2002 (MIC=12 ug/ml). Exhibits little hemolytic activity against washed human erythrocytes. Its mast cell degranulation activity may be related to the activation of G-protein coupled receptors in mast cells as well as interaction with other proteins located in cell endosomal membranes in the mast cells. In Vespa magnifica (Hornet), this protein is Mastoparan-like peptide 12c.